The following is a 634-amino-acid chain: Glutamate--tRNA ligase (634 aa).

Positions Pro108 to His118 match the 'HIGH' region motif.

It belongs to the class-I aminoacyl-tRNA synthetase family. Glutamate--tRNA ligase type 2 subfamily.

It localises to the cytoplasm. It carries out the reaction tRNA(Glu) + L-glutamate + ATP = L-glutamyl-tRNA(Glu) + AMP + diphosphate. Functionally, catalyzes the attachment of glutamate to tRNA(Glu) in a two-step reaction: glutamate is first activated by ATP to form Glu-AMP and then transferred to the acceptor end of tRNA(Glu). This chain is Glutamate--tRNA ligase, found in Methanoregula boonei (strain DSM 21154 / JCM 14090 / 6A8).